The chain runs to 517 residues: MNGDISHPRGSGPGNLGSLEETLQQMNTLIKENRDLKEALKQTNLSMKERFEGLSAWKEKQKEERDFLEQRLEEARTRLNTMDVENEALKNQVKELEKSGAECLHTELEALRGQILRIQAEKNDLVAMNSELQLKMGQGSPSNSFIEIRIADDDLKVTKDLSSVPEASAFSMPKAESEEQTVRQLLRSLRAETDEKERLQLTLQEARGRIAELESKLEHADSSAQTSLPSAAETNASTEVKNLEDQLLKLCNELKQAQIKLDEAESMKRNLQDRCKDLEQDLGTLKTQLGDKQKVQAENDCLKVQMESLQAAIKLEQKKTQDEKNNLNQLKDAYTKLFEDYSELQEEKKKRESCVSKDDYDELQTRFATAEKALADKQQKIDEMKMELFQKEKDLETISVFQAQAEIYSSDFYAERAAREKIHEEKERLATQLEYVKKQNSQLQEEMESLGRHSMSEMQRRHVPRGANPQGPTAPNNLPGGRGEWQQQNIPDHACPKCGEVLPDLDSLQIHIMDCII.

2 coiled-coil regions span residues 15–127 (NLGS…DLVA) and 174–453 (KAES…LGRH). Disordered regions lie at residues 216–237 (KLEHADSSAQTSLPSAAETNAS) and 454–488 (SMSEMQRRHVPRGANPQGPTAPNNLPGGRGEWQQQ). A compositionally biased stretch (polar residues) spans 222-237 (SSAQTSLPSAAETNAS). A CCHC NOA-type zinc finger spans residues 487–517 (QQNIPDHACPKCGEVLPDLDSLQIHIMDCII). 4 residues coordinate Zn(2+): Cys-495, Cys-498, His-511, and Cys-515.

It localises to the cytoplasm. Its subcellular location is the perinuclear region. The protein localises to the golgi apparatus. The protein resides in the trans-Golgi network. It is found in the cytoplasmic vesicle. It localises to the recycling endosome. Its subcellular location is the autophagosome. Probably part of the TNF-alpha signaling pathway that can shift the equilibrium toward induction of cell death. May act by regulating membrane trafficking and cellular morphogenesis. This is Optineurin (optn) from Danio rerio (Zebrafish).